The following is a 182-amino-acid chain: Gremlin-1 (182 aa).

A signal peptide spans 1–24; the sequence is MNCLVYALGSLFLLSGLLLPSSEG. The tract at residues 23–65 is disordered; it reads EGKKKVSGSQGAIPPPDKGQPNDSEQGQAQPGDRVRGKGKGQA. An N-linked (GlcNAc...) asparagine glycan is attached at N44. Cystine bridges form between C92-C142, C106-C156, C116-C174, and C120-C176. The CTCK domain maps to 92-182; sequence CKTQPLKQTI…QCRCISIDLD (91 aa).

The protein belongs to the DAN family.

The protein resides in the secreted. In terms of biological role, cytokine that has an axial patterning activity. Acts like BMP antagonist in embryonic explants. Blocks the BMP2 activity. The chain is Gremlin-1 (grem1) from Xenopus laevis (African clawed frog).